The sequence spans 159 residues: Trafficking protein particle complex subunit 6A (159 aa).

A Phosphoserine modification is found at serine 33.

The protein belongs to the TRAPP small subunits family. BET3 subfamily. In terms of assembly, part of the multisubunit transport protein particle (TRAPP) complex. Heterodimer with TRAPPC3. The heterodimer TRAPPC3-TRAPPC6A interacts with TRAPPC2L. Interacts with TRAPPC2L.

Its subcellular location is the golgi apparatus. It is found in the cis-Golgi network. The protein resides in the endoplasmic reticulum. Its function is as follows. May play a role in vesicular transport during the biogenesis of melanosomes. The polypeptide is Trafficking protein particle complex subunit 6A (Homo sapiens (Human)).